The following is a 213-amino-acid chain: Thiopurine S-methyltransferase (213 aa).

Positions 10, 45, 66, and 121 each coordinate S-adenosyl-L-methionine.

It belongs to the class I-like SAM-binding methyltransferase superfamily. TPMT family.

The protein resides in the cytoplasm. The enzyme catalyses S-adenosyl-L-methionine + a thiopurine = S-adenosyl-L-homocysteine + a thiopurine S-methylether.. The protein is Thiopurine S-methyltransferase of Aliivibrio fischeri (strain ATCC 700601 / ES114) (Vibrio fischeri).